The chain runs to 198 residues: MRIKQSEFIISAVKPHQYPIDNRNEVAFVGRSNVGKSSLINSLTNRKKLAKVSGTPGKTRLINFFLINNDFYLVDLPGYGYAKVSKSEKDTWGKTIETYLSHREELKRIVCLVDSRHKPTGDDIMMYEWAKHFGYDVVIVATKSDKLKNAEFKKSEKLIRDTLKLTKDDKFYFYSSLNKKGTEELIDKLFLEFATDID.

Residues 22 to 195 (NRNEVAFVGR…IDKLFLEFAT (174 aa)) form the EngB-type G domain. GTP-binding positions include 30-37 (GRSNVGKS), 57-61 (GKTRL), 75-78 (DLPG), 142-145 (TKSD), and 174-176 (YSS). 2 residues coordinate Mg(2+): serine 37 and threonine 59.

It belongs to the TRAFAC class TrmE-Era-EngA-EngB-Septin-like GTPase superfamily. EngB GTPase family. Requires Mg(2+) as cofactor.

Functionally, necessary for normal cell division and for the maintenance of normal septation. The protein is Probable GTP-binding protein EngB of Clostridium botulinum (strain Alaska E43 / Type E3).